A 256-amino-acid polypeptide reads, in one-letter code: Acetyl-coenzyme A carboxylase carboxyl transferase subunit alpha (256 aa).

Positions 1–236 constitute a CoA carboxyltransferase C-terminal domain; sequence MTDVARILKE…KSHLIDEITQ (236 aa).

This sequence belongs to the AccA family. Acetyl-CoA carboxylase is a heterohexamer composed of biotin carboxyl carrier protein (AccB), biotin carboxylase (AccC) and two subunits each of ACCase subunit alpha (AccA) and ACCase subunit beta (AccD).

Its subcellular location is the cytoplasm. It carries out the reaction N(6)-carboxybiotinyl-L-lysyl-[protein] + acetyl-CoA = N(6)-biotinyl-L-lysyl-[protein] + malonyl-CoA. Its pathway is lipid metabolism; malonyl-CoA biosynthesis; malonyl-CoA from acetyl-CoA: step 1/1. Component of the acetyl coenzyme A carboxylase (ACC) complex. First, biotin carboxylase catalyzes the carboxylation of biotin on its carrier protein (BCCP) and then the CO(2) group is transferred by the carboxyltransferase to acetyl-CoA to form malonyl-CoA. This chain is Acetyl-coenzyme A carboxylase carboxyl transferase subunit alpha, found in Streptococcus equi subsp. equi (strain 4047).